Here is a 318-residue protein sequence, read N- to C-terminus: MVVIVDTISNPLRPRHPEKVNRPDSASPPKPDWIRVRAPNTRGYADTRNIVRANGLHTVCEEAGCPNIGECWDKKHATFMIMGDTCTRACAFCNVKTGLPNALDADEPQNVAEAVAKLGLAHVVITSVDRDDLADGGAEHFAQTIRAIRAACPSTTIEILTPDFLRKEGALEVVVAARPDVFNHNLETVPSRYLTVRPGARYFHSIRLLQRVKELDASIFTKSGIMVGLGEERHEVQQVMDDLRSADVDFLTIGQYLQPTRKHHAVMRYVPPDEFSSYEKVAYTKGFLMVSASPLTRSSHHAGEDFARLKAARAAHAR.

A disordered region spans residues 6–32 (DTISNPLRPRHPEKVNRPDSASPPKPD). [4Fe-4S] cluster-binding residues include Cys-60, Cys-65, Cys-71, Cys-86, Cys-90, Cys-93, and Ser-299. The Radical SAM core domain occupies 72-288 (WDKKHATFMI…EKVAYTKGFL (217 aa)).

It belongs to the radical SAM superfamily. Lipoyl synthase family. The cofactor is [4Fe-4S] cluster.

The protein resides in the cytoplasm. It carries out the reaction [[Fe-S] cluster scaffold protein carrying a second [4Fe-4S](2+) cluster] + N(6)-octanoyl-L-lysyl-[protein] + 2 oxidized [2Fe-2S]-[ferredoxin] + 2 S-adenosyl-L-methionine + 4 H(+) = [[Fe-S] cluster scaffold protein] + N(6)-[(R)-dihydrolipoyl]-L-lysyl-[protein] + 4 Fe(3+) + 2 hydrogen sulfide + 2 5'-deoxyadenosine + 2 L-methionine + 2 reduced [2Fe-2S]-[ferredoxin]. It participates in protein modification; protein lipoylation via endogenous pathway; protein N(6)-(lipoyl)lysine from octanoyl-[acyl-carrier-protein]: step 2/2. Its function is as follows. Catalyzes the radical-mediated insertion of two sulfur atoms into the C-6 and C-8 positions of the octanoyl moiety bound to the lipoyl domains of lipoate-dependent enzymes, thereby converting the octanoylated domains into lipoylated derivatives. This Bradyrhizobium diazoefficiens (strain JCM 10833 / BCRC 13528 / IAM 13628 / NBRC 14792 / USDA 110) protein is Lipoyl synthase 1.